A 238-amino-acid polypeptide reads, in one-letter code: Ribonuclease PH (238 aa).

Residues Arg-86 and 124-126 (GTR) each bind phosphate.

Belongs to the RNase PH family. Homohexameric ring arranged as a trimer of dimers.

It catalyses the reaction tRNA(n+1) + phosphate = tRNA(n) + a ribonucleoside 5'-diphosphate. Functionally, phosphorolytic 3'-5' exoribonuclease that plays an important role in tRNA 3'-end maturation. Removes nucleotide residues following the 3'-CCA terminus of tRNAs; can also add nucleotides to the ends of RNA molecules by using nucleoside diphosphates as substrates, but this may not be physiologically important. Probably plays a role in initiation of 16S rRNA degradation (leading to ribosome degradation) during starvation. This chain is Ribonuclease PH, found in Alkalilimnicola ehrlichii (strain ATCC BAA-1101 / DSM 17681 / MLHE-1).